Reading from the N-terminus, the 437-residue chain is UBX domain-containing protein 6 (437 aa).

Disordered regions lie at residues 1–45 and 89–109; these read MNSF…AQGG and ERRQ…QPDR. Positions 7-18 are enriched in basic residues; sequence FLNKKRVQNHFK. The PUB domain occupies 179–251; sequence ETAIETICKY…VFTKPSDVHL (73 aa). The UBX domain occupies 332 to 409; it reads YRYKYTLIRV…SLAPAALLHV (78 aa).

In terms of assembly, interacts with cdc-48.1 (via N-terminus) and cdc-48.2 (via N-terminus). In terms of tissue distribution, expressed in the pharynx and some head neurons.

Probably acts as an adapter for ATPase cdc-48.1 and/or cdc-48.2, conferring substrate specificity. Involved in the lysosomal clearance of cellular material in diet restricted conditions. The polypeptide is UBX domain-containing protein 6 (Caenorhabditis elegans).